Here is a 350-residue protein sequence, read N- to C-terminus: Histidinol-phosphate aminotransferase (350 aa).

An N6-(pyridoxal phosphate)lysine modification is found at Lys-209.

The protein belongs to the class-II pyridoxal-phosphate-dependent aminotransferase family. Histidinol-phosphate aminotransferase subfamily. Homodimer. Requires pyridoxal 5'-phosphate as cofactor.

It catalyses the reaction L-histidinol phosphate + 2-oxoglutarate = 3-(imidazol-4-yl)-2-oxopropyl phosphate + L-glutamate. It participates in amino-acid biosynthesis; L-histidine biosynthesis; L-histidine from 5-phospho-alpha-D-ribose 1-diphosphate: step 7/9. This chain is Histidinol-phosphate aminotransferase, found in Citrifermentans bemidjiense (strain ATCC BAA-1014 / DSM 16622 / JCM 12645 / Bem) (Geobacter bemidjiensis).